The following is a 121-amino-acid chain: Small ribosomal subunit protein uS13 (121 aa).

Positions 91–121 are disordered; it reads HKRGLPVRGQRTRTNARTRKGPRRAAASLKK.

It belongs to the universal ribosomal protein uS13 family. Part of the 30S ribosomal subunit. Forms a loose heterodimer with protein S19. Forms two bridges to the 50S subunit in the 70S ribosome.

Located at the top of the head of the 30S subunit, it contacts several helices of the 16S rRNA. In the 70S ribosome it contacts the 23S rRNA (bridge B1a) and protein L5 of the 50S subunit (bridge B1b), connecting the 2 subunits; these bridges are implicated in subunit movement. Contacts the tRNAs in the A and P-sites. The chain is Small ribosomal subunit protein uS13 from Bordetella avium (strain 197N).